We begin with the raw amino-acid sequence, 359 residues long: WW domain-binding protein wbp-11 (359 aa).

3 disordered regions span residues 1-38 (MPSI…DRQQ), 235-264 (PSSY…NPMG), and 317-341 (PGDN…QKQA). A compositionally biased stretch (basic and acidic residues) spans 8 to 27 (KSGERYRAPTDQARKMDRKK). Residues 245-256 (MPHHHHHHHPHA) are compositionally biased toward basic residues.

Functionally, activates pre-mRNA splicing. May inhibit PP1 phosphatase activity. The sequence is that of WW domain-binding protein wbp-11 from Caenorhabditis elegans.